We begin with the raw amino-acid sequence, 300 residues long: Ribosomal protein L11 methyltransferase (300 aa).

The S-adenosyl-L-methionine site is built by T152, G173, D195, and N234.

The protein belongs to the methyltransferase superfamily. PrmA family.

The protein localises to the cytoplasm. The catalysed reaction is L-lysyl-[protein] + 3 S-adenosyl-L-methionine = N(6),N(6),N(6)-trimethyl-L-lysyl-[protein] + 3 S-adenosyl-L-homocysteine + 3 H(+). In terms of biological role, methylates ribosomal protein L11. In Paraburkholderia phymatum (strain DSM 17167 / CIP 108236 / LMG 21445 / STM815) (Burkholderia phymatum), this protein is Ribosomal protein L11 methyltransferase.